The sequence spans 412 residues: Glucose-1-phosphate adenylyltransferase (412 aa).

Alpha-D-glucose 1-phosphate-binding positions include Gly-169, 184-185 (EK), and Ser-201.

Belongs to the bacterial/plant glucose-1-phosphate adenylyltransferase family. In terms of assembly, homotetramer.

The catalysed reaction is alpha-D-glucose 1-phosphate + ATP + H(+) = ADP-alpha-D-glucose + diphosphate. Its pathway is glycan biosynthesis; glycogen biosynthesis. In terms of biological role, involved in the biosynthesis of ADP-glucose, a building block required for the elongation reactions to produce glycogen. Catalyzes the reaction between ATP and alpha-D-glucose 1-phosphate (G1P) to produce pyrophosphate and ADP-Glc. In Geobacter metallireducens (strain ATCC 53774 / DSM 7210 / GS-15), this protein is Glucose-1-phosphate adenylyltransferase.